Consider the following 819-residue polypeptide: Leucine--tRNA ligase (819 aa).

Positions 36-46 (PYPSGKIHMGH) match the 'HIGH' region motif. The 'KMSKS' region signature appears at 586-590 (KMSKS). Residue Lys-589 coordinates ATP.

It belongs to the class-I aminoacyl-tRNA synthetase family.

The protein localises to the cytoplasm. The catalysed reaction is tRNA(Leu) + L-leucine + ATP = L-leucyl-tRNA(Leu) + AMP + diphosphate. This Wolbachia pipientis subsp. Culex pipiens (strain wPip) protein is Leucine--tRNA ligase.